The sequence spans 335 residues: Holliday junction branch migration complex subunit RuvB (335 aa).

The tract at residues 4–184 (ADRLIQPTAL…FGIVQRLEFY (181 aa)) is large ATPase domain (RuvB-L). ATP is bound by residues isoleucine 23, arginine 24, glycine 65, lysine 68, threonine 69, threonine 70, 131-133 (EDY), arginine 174, tyrosine 184, and arginine 221. Threonine 69 is a binding site for Mg(2+). The segment at 185-255 (NIKDLTQIVK…VASAALDMLD (71 aa)) is small ATPAse domain (RuvB-S). The segment at 258-335 (KEGFDYMDRK…LHFGYDYEPN (78 aa)) is head domain (RuvB-H). Arginine 294, arginine 313, and arginine 318 together coordinate DNA.

The protein belongs to the RuvB family. Homohexamer. Forms an RuvA(8)-RuvB(12)-Holliday junction (HJ) complex. HJ DNA is sandwiched between 2 RuvA tetramers; dsDNA enters through RuvA and exits via RuvB. An RuvB hexamer assembles on each DNA strand where it exits the tetramer. Each RuvB hexamer is contacted by two RuvA subunits (via domain III) on 2 adjacent RuvB subunits; this complex drives branch migration. In the full resolvosome a probable DNA-RuvA(4)-RuvB(12)-RuvC(2) complex forms which resolves the HJ.

It is found in the cytoplasm. It carries out the reaction ATP + H2O = ADP + phosphate + H(+). In terms of biological role, the RuvA-RuvB-RuvC complex processes Holliday junction (HJ) DNA during genetic recombination and DNA repair, while the RuvA-RuvB complex plays an important role in the rescue of blocked DNA replication forks via replication fork reversal (RFR). RuvA specifically binds to HJ cruciform DNA, conferring on it an open structure. The RuvB hexamer acts as an ATP-dependent pump, pulling dsDNA into and through the RuvAB complex. RuvB forms 2 homohexamers on either side of HJ DNA bound by 1 or 2 RuvA tetramers; 4 subunits per hexamer contact DNA at a time. Coordinated motions by a converter formed by DNA-disengaged RuvB subunits stimulates ATP hydrolysis and nucleotide exchange. Immobilization of the converter enables RuvB to convert the ATP-contained energy into a lever motion, pulling 2 nucleotides of DNA out of the RuvA tetramer per ATP hydrolyzed, thus driving DNA branch migration. The RuvB motors rotate together with the DNA substrate, which together with the progressing nucleotide cycle form the mechanistic basis for DNA recombination by continuous HJ branch migration. Branch migration allows RuvC to scan DNA until it finds its consensus sequence, where it cleaves and resolves cruciform DNA. The protein is Holliday junction branch migration complex subunit RuvB of Pseudoalteromonas atlantica (strain T6c / ATCC BAA-1087).